Reading from the N-terminus, the 419-residue chain is tRNA(Ile)-lysidine synthase (419 aa).

Position 25–30 (serine 25–serine 30) interacts with ATP.

This sequence belongs to the tRNA(Ile)-lysidine synthase family.

The protein resides in the cytoplasm. The enzyme catalyses cytidine(34) in tRNA(Ile2) + L-lysine + ATP = lysidine(34) in tRNA(Ile2) + AMP + diphosphate + H(+). Ligates lysine onto the cytidine present at position 34 of the AUA codon-specific tRNA(Ile) that contains the anticodon CAU, in an ATP-dependent manner. Cytidine is converted to lysidine, thus changing the amino acid specificity of the tRNA from methionine to isoleucine. The protein is tRNA(Ile)-lysidine synthase of Actinobacillus pleuropneumoniae serotype 7 (strain AP76).